The primary structure comprises 498 residues: Cobyric acid synthase (498 aa).

The region spanning 257-447 (DLEIAVLRLP…LHGLLDNGPW (191 aa)) is the GATase cobBQ-type domain. Catalysis depends on cysteine 338, which acts as the Nucleophile. The active site involves histidine 439.

The protein belongs to the CobB/CobQ family. CobQ subfamily.

The protein operates within cofactor biosynthesis; adenosylcobalamin biosynthesis. Its function is as follows. Catalyzes amidations at positions B, D, E, and G on adenosylcobyrinic A,C-diamide. NH(2) groups are provided by glutamine, and one molecule of ATP is hydrogenolyzed for each amidation. The polypeptide is Cobyric acid synthase (Synechococcus sp. (strain CC9605)).